The chain runs to 468 residues: Dimethylamine methyltransferase MtbB2 (468 aa).

A non-standard amino acid (pyrrolysine) is located at residue O356.

This sequence belongs to the dimethylamine methyltransferase family.

It carries out the reaction Co(I)-[dimethylamine-specific corrinoid protein] + dimethylamine + H(+) = methyl-Co(III)-[dimethylamine-specific corrinoid protein] + methylamine. It functions in the pathway one-carbon metabolism; methanogenesis from dimethylamine. Catalyzes the transfer of a methyl group from dimethylamine to the corrinoid cofactor of MtbC. The polypeptide is Dimethylamine methyltransferase MtbB2 (mtbB2) (Methanosarcina acetivorans (strain ATCC 35395 / DSM 2834 / JCM 12185 / C2A)).